Reading from the N-terminus, the 222-residue chain is Putative N-acetylmannosamine-6-phosphate 2-epimerase (222 aa).

It belongs to the NanE family.

The enzyme catalyses an N-acyl-D-glucosamine 6-phosphate = an N-acyl-D-mannosamine 6-phosphate. It participates in amino-sugar metabolism; N-acetylneuraminate degradation; D-fructose 6-phosphate from N-acetylneuraminate: step 3/5. Its function is as follows. Converts N-acetylmannosamine-6-phosphate (ManNAc-6-P) to N-acetylglucosamine-6-phosphate (GlcNAc-6-P). The sequence is that of Putative N-acetylmannosamine-6-phosphate 2-epimerase from Staphylococcus aureus (strain MSSA476).